A 1025-amino-acid chain; its full sequence is Exportin-T (1025 aa).

The protein belongs to the exportin family.

It localises to the nucleus. It is found in the cytoplasm. Functionally, tRNA nucleus export receptor which facilitates tRNA translocation across the nuclear pore complex. Involved in pre-tRNA splicing, probably by affecting the interaction of pre-tRNA with splicing endonuclease. This is Exportin-T (LOS1) from Yarrowia lipolytica (strain CLIB 122 / E 150) (Yeast).